Reading from the N-terminus, the 98-residue chain is Feather keratin 2 (98 aa).

Ser-2 is subject to N-acetylserine.

This sequence belongs to the avian keratin family. In terms of assembly, the avian keratins (F-ker, S-ker, C-ker and B-ker) are a complex mixture of very similar polypeptides.

In Gallus gallus (Chicken), this protein is Feather keratin 2.